Reading from the N-terminus, the 21-residue chain is GSKKPVPIIYCNRRTGKCQRM.

An intrachain disulfide couples cysteine 11 to cysteine 18.

It is found in the secreted. Its function is as follows. Insect defense peptide with a broad spectrum of activity against Gram-positive and Gram-negative bacteria and fungi. No activity against S.aureus. Stops respiration in bacteria but does not permeabilize their inner membranes. This chain is Thanatin, found in Podisus maculiventris (Spined soldier bug).